A 1475-amino-acid chain; its full sequence is Gag-Pol polyprotein (1475 aa).

Residues 130-147 (TQNTQNKKQTSNQTNTQS) are compositionally biased toward low complexity. Positions 130 to 159 (TQNTQNKKQTSNQTNTQSLPAITTQDGTPR) are disordered. 2 CCHC-type zinc fingers span residues 403 to 420 (RRCY…NCKQ) and 421 to 438 (QKCY…NCRS). A Peptidase A2 domain is found at 492 to 565 (VKGLVDTGAD…TPVNLFGRSL (74 aa)). Residue Asp-497 is part of the active site. One can recognise a Reverse transcriptase domain in the interval 619–806 (EGKISEAAWD…ERVKWIGFEL (188 aa)). The RNase H type-1 domain occupies 999 to 1119 (RENLTTYYTD…ADEGVKKALE (121 aa)). The Integrase-type zinc-finger motif lies at 1199–1240 (ENIPSATEDHERWHTSPDILVRQFHLPKRIAKEIVARCQECK). Zn(2+) contacts are provided by His-1208, His-1212, Cys-1236, and Cys-1239. One can recognise an Integrase catalytic domain in the interval 1248–1400 (RGTNPRGRFL…TPYEIYLESE (153 aa)). A DNA-binding region (integrase-type) is located at residues 1419-1465 (KWCYVRNRRKEWKGPYKVLWDGDGAAVIEEEGKTALYPHRHMRFIPP).

In terms of assembly, interacts with host light chain cytoplasmic dynein DYNLL1; this interaction is critical for intracellular microtubule-dependent viral genome transport. In terms of processing, specific enzymatic cleavages by the viral protease yield mature proteins. The protease is released by autocatalytic cleavage. The polyprotein is cleaved during and after budding, this process is termed maturation.

Its subcellular location is the virion. The enzyme catalyses DNA(n) + a 2'-deoxyribonucleoside 5'-triphosphate = DNA(n+1) + diphosphate. It carries out the reaction Endohydrolysis of RNA in RNA/DNA hybrids. Three different cleavage modes: 1. sequence-specific internal cleavage of RNA. Human immunodeficiency virus type 1 and Moloney murine leukemia virus enzymes prefer to cleave the RNA strand one nucleotide away from the RNA-DNA junction. 2. RNA 5'-end directed cleavage 13-19 nucleotides from the RNA end. 3. DNA 3'-end directed cleavage 15-20 nucleotides away from the primer terminus.. The catalysed reaction is 3'-end directed exonucleolytic cleavage of viral RNA-DNA hybrid.. Its function is as follows. Matrix protein p16 forms the outer shell of the core of the virus, lining the inner surface of the viral membrane. Functionally, capsid protein p26 forms the conical core of the virus that encapsulates the genomic RNA-nucleocapsid complex. Interaction between incoming particle-associated Gag proteins and host dynein allows intracellular microtubule-dependent virus transport toward the perinuclear region, prior to nucleus translocation and integration into host genome. In terms of biological role, the aspartyl protease mediates proteolytic cleavages of Gag and Gag-Pol polyproteins during or shortly after the release of the virion from the plasma membrane. Cleavages take place as an ordered, step-wise cascade to yield mature proteins. This process is called maturation. Displays maximal activity during the budding process just prior to particle release from the cell. Reverse transcriptase/ribonuclease H (RT) is a multifunctional enzyme that converts the viral RNA genome into dsDNA in the cytoplasm, shortly after virus entry into the cell. This enzyme displays a DNA polymerase activity that can copy either DNA or RNA templates, and a ribonuclease H (RNase H) activity that cleaves the RNA strand of RNA-DNA heteroduplexes in a partially processive 3' to 5' endonucleasic mode. Conversion of viral genomic RNA into dsDNA requires many steps. A tRNA binds to the primer-binding site (PBS) situated at the 5'-end of the viral RNA. RT uses the 3' end of the tRNA primer to perform a short round of RNA-dependent minus-strand DNA synthesis. The reading proceeds through the U5 region and ends after the repeated (R) region which is present at both ends of viral RNA. The portion of the RNA-DNA heteroduplex is digested by the RNase H, resulting in a ssDNA product attached to the tRNA primer. This ssDNA/tRNA hybridizes with the identical R region situated at the 3' end of viral RNA. This template exchange, known as minus-strand DNA strong stop transfer, can be either intra- or intermolecular. RT uses the 3' end of this newly synthesized short ssDNA to perform the RNA-dependent minus-strand DNA synthesis of the whole template. RNase H digests the RNA template except for a polypurine tract (PPT) situated at the 5'-end of the genome. It is not clear if both polymerase and RNase H activities are simultaneous. RNase H probably can proceed both in a polymerase-dependent (RNA cut into small fragments by the same RT performing DNA synthesis) and a polymerase-independent mode (cleavage of remaining RNA fragments by free RTs). Secondly, RT performs DNA-directed plus-strand DNA synthesis using the PPT that has not been removed by RNase H as primer. PPT and tRNA primers are then removed by RNase H. The 3' and 5' ssDNA PBS regions hybridize to form a circular dsDNA intermediate. Strand displacement synthesis by RT to the PBS and PPT ends produces a blunt ended, linear dsDNA copy of the viral genome that includes long terminal repeats (LTRs) at both ends. Its function is as follows. Integrase catalyzes viral DNA integration into the host chromosome, by performing a series of DNA cutting and joining reactions. This enzyme activity takes place after virion entry into a cell and reverse transcription of the RNA genome in dsDNA. This is Gag-Pol polyprotein (gag-pol) from Bovine immunodeficiency virus (strain R29) (BIV).